A 72-amino-acid polypeptide reads, in one-letter code: Enterobactin biosynthesis protein YbdZ (72 aa).

The protein belongs to the MbtH-like family.

Functionally, involved in the biosynthesis of the siderophore enterobactin (enterochelin), which is a macrocyclic trimeric lactone of N-(2,3-dihydroxybenzoyl)-serine. Plays a role in the catalytic function of EntF. It is required for adenylation of amino acids in non-ribosomal peptide biosynthesis. The sequence is that of Enterobactin biosynthesis protein YbdZ from Escherichia coli (strain K12).